The sequence spans 208 residues: Small ribosomal subunit protein uS4 (208 aa).

Residues 98 to 158 (SRLDNAVYRL…EKSRNMQVID (61 aa)) form the S4 RNA-binding domain.

It belongs to the universal ribosomal protein uS4 family. Part of the 30S ribosomal subunit. Contacts protein S5. The interaction surface between S4 and S5 is involved in control of translational fidelity.

Its function is as follows. One of the primary rRNA binding proteins, it binds directly to 16S rRNA where it nucleates assembly of the body of the 30S subunit. In terms of biological role, with S5 and S12 plays an important role in translational accuracy. In Desulfosudis oleivorans (strain DSM 6200 / JCM 39069 / Hxd3) (Desulfococcus oleovorans), this protein is Small ribosomal subunit protein uS4.